Reading from the N-terminus, the 100-residue chain is MLAIENYLILSAILFSIGTIGVLTRRNAIVIFMCIEMMLNAVNLTFIAFSRHLGNIDGQVFVFFVMTVAAAEAAVGLALMIAFFKNRESIDVEDVNLMKL.

The next 3 helical transmembrane spans lie at 2–22, 29–49, and 61–81; these read LAIE…TIGV, IVIF…FIAF, and FVFF…ALMI.

Belongs to the complex I subunit 4L family. As to quaternary structure, NDH-1 is composed of 14 different subunits. Subunits NuoA, H, J, K, L, M, N constitute the membrane sector of the complex.

The protein localises to the cell inner membrane. It catalyses the reaction a quinone + NADH + 5 H(+)(in) = a quinol + NAD(+) + 4 H(+)(out). Its function is as follows. NDH-1 shuttles electrons from NADH, via FMN and iron-sulfur (Fe-S) centers, to quinones in the respiratory chain. The immediate electron acceptor for the enzyme in this species is believed to be ubiquinone. Couples the redox reaction to proton translocation (for every two electrons transferred, four hydrogen ions are translocated across the cytoplasmic membrane), and thus conserves the redox energy in a proton gradient. This is NADH-quinone oxidoreductase subunit K 2 from Citrifermentans bemidjiense (strain ATCC BAA-1014 / DSM 16622 / JCM 12645 / Bem) (Geobacter bemidjiensis).